Here is a 453-residue protein sequence, read N- to C-terminus: Na(+)/H(+) antiporter NhaA (453 aa).

Transmembrane regions (helical) follow at residues 22–42 (ASLL…SPWA), 72–92 (MLAF…GLEI), 108–128 (LLPI…YMLV), 137–157 (GAAI…GLLG), 166–186 (IFLT…IALF), 189–209 (GHIA…LYVG), 218–238 (LFFY…GIHP), 316–336 (PLVN…VTFG), 343–363 (LVNV…LGIF), 386–406 (LFGV…IANL), and 424–444 (LGVF…LKWV).

Belongs to the NhaA Na(+)/H(+) (TC 2.A.33) antiporter family.

The protein resides in the cell inner membrane. It catalyses the reaction Na(+)(in) + 2 H(+)(out) = Na(+)(out) + 2 H(+)(in). Its function is as follows. Na(+)/H(+) antiporter that extrudes sodium in exchange for external protons. The sequence is that of Na(+)/H(+) antiporter NhaA from Parabacteroides distasonis (strain ATCC 8503 / DSM 20701 / CIP 104284 / JCM 5825 / NCTC 11152).